A 113-amino-acid chain; its full sequence is MNTFKVQFFSPDNRISFDEVVSLSVNGLEGELVILAYHSPYLIYLLPGIITAQMSNQTKEKVVIDNGILEVANNNCSIITNQIQVFDHLTHDEESLKDKRVGIYLSYLDVKSL.

Belongs to the ATPase epsilon chain family. F-type ATPases have 2 components, CF(1) - the catalytic core - and CF(0) - the membrane proton channel. CF(1) has five subunits: alpha(3), beta(3), gamma(1), delta(1), epsilon(1). CF(0) has three main subunits: a, b and c.

The protein localises to the cell membrane. Produces ATP from ADP in the presence of a proton gradient across the membrane. In Wolbachia pipientis subsp. Culex pipiens (strain wPip), this protein is ATP synthase epsilon chain.